A 129-amino-acid chain; its full sequence is Small ribosomal subunit protein uS13 (129 aa).

Residues 95–114 (NLPVRGQRTKTNARTRRGPR) show a composition bias toward basic residues. Residues 95-129 (NLPVRGQRTKTNARTRRGPRKTVAGRGQKRGATKK) form a disordered region.

It belongs to the universal ribosomal protein uS13 family. As to quaternary structure, part of the 30S ribosomal subunit. Forms a loose heterodimer with protein S19. Forms two bridges to the 50S subunit in the 70S ribosome.

Located at the top of the head of the 30S subunit, it contacts several helices of the 16S rRNA. In the 70S ribosome it contacts the 23S rRNA (bridge B1a) and protein L5 of the 50S subunit (bridge B1b), connecting the 2 subunits; these bridges are implicated in subunit movement. Contacts the tRNAs in the A and P-sites. In Dehalococcoides mccartyi (strain ATCC BAA-2100 / JCM 16839 / KCTC 5957 / BAV1), this protein is Small ribosomal subunit protein uS13.